The primary structure comprises 67 residues: Large ribosomal subunit protein uL30 (67 aa).

This sequence belongs to the universal ribosomal protein uL30 family. As to quaternary structure, part of the 50S ribosomal subunit.

This is Large ribosomal subunit protein uL30 from Sorangium cellulosum (strain So ce56) (Polyangium cellulosum (strain So ce56)).